A 1116-amino-acid chain; its full sequence is Angiopoietin-1 receptor (1116 aa).

The N-terminal stretch at 1–21 (MCLLDSCTALLLLGCWMSGSA) is a signal peptide. Over 22 to 745 (VRISDVTLVN…FAAHGHLLLY (724 aa)) the chain is Extracellular. A disulfide bridge links cysteine 46 with cysteine 106. The Ig-like C2-type 1 domain occupies 46–126 (CVSSDWSSGG…YTYKMLQEAA (81 aa)). Asparagine 110, asparagine 143, and asparagine 223 each carry an N-linked (GlcNAc...) asparagine glycan. EGF-like domains are found at residues 214–256 (SCRA…HTCD), 258–302 (VCGE…LSCN), and 304–342 (ACPD…SRCE). Intrachain disulfides connect cysteine 215-cysteine 224, cysteine 228-cysteine 237, cysteine 231-cysteine 244, cysteine 246-cysteine 255, cysteine 259-cysteine 268, cysteine 272-cysteine 277, cysteine 283-cysteine 290, cysteine 292-cysteine 301, cysteine 305-cysteine 314, cysteine 318-cysteine 325, cysteine 320-cysteine 331, and cysteine 333-cysteine 341. The 91-residue stretch at 348–438 (PVISHLRDVE…MQVEDEFTVE (91 aa)) folds into the Ig-like C2-type 2 domain. 3 N-linked (GlcNAc...) asparagine glycosylation sites follow: asparagine 367, asparagine 387, and asparagine 425. A disulfide bond links cysteine 368 and cysteine 422. Fibronectin type-III domains lie at 444–538 (RPQN…TQVL), 540–633 (LPVG…QLPP), and 634–729 (PPAN…TLPQ). Residues asparagine 590, asparagine 637, and asparagine 642 are each glycosylated (N-linked (GlcNAc...) asparagine). Residues 746-766 (AILGSAGMTCCTVLLAFCIVL) traverse the membrane as a helical segment. Residues 767 to 1116 (QLKRNTLQRR…GIDCSAEEAG (350 aa)) are Cytoplasmic-facing. The Protein kinase domain maps to 816 to 1095 (IQFQDVLGEG…RMLEERKTYV (280 aa)). ATP contacts are provided by residues 822–830 (LGEGNFGQV) and lysine 847. Tyrosine 852 bears the Phosphotyrosine; by autocatalysis mark. Aspartate 956 (proton acceptor) is an active-site residue. Phosphotyrosine; by autocatalysis occurs at positions 984, 1094, and 1100.

The protein belongs to the protein kinase superfamily. Tyr protein kinase family. Tie subfamily. As to quaternary structure, interacts with svep1. In terms of processing, autophosphorylated on tyrosine residues in response to ligand binding. Autophosphorylation occurs in trans, i.e. one subunit of the dimeric receptor phosphorylates tyrosine residues on the other subunit. Autophosphorylation occurs in a sequential manner, where Tyr-984 in the kinase activation loop is phosphorylated first, followed by autophosphorylation at additional tyrosine residues. Phosphorylation is important for interaction with scaffold proteins and effectors.

The protein localises to the cell membrane. The protein resides in the cell junction. Its subcellular location is the focal adhesion. It is found in the cytoplasm. It localises to the cytoskeleton. The enzyme catalyses L-tyrosyl-[protein] + ATP = O-phospho-L-tyrosyl-[protein] + ADP + H(+). With respect to regulation, angiopoietin binding leads to receptor dimerization and activation by autophosphorylation at Tyr-984 on the kinase activation loop. Its function is as follows. Tyrosine-protein kinase that acts as a cell-surface receptor for angiopoietins and regulates angiogenesis, endothelial cell survival, proliferation, migration, adhesion and cell spreading, reorganization of the actin cytoskeleton, but also maintenance of vascular quiescence. Can activate or inhibit angiogenesis, depending on the context. Angiopoietin signaling triggers receptor dimerization and autophosphorylation at specific tyrosine residues that then serve as binding sites for scaffold proteins and effectors. The chain is Angiopoietin-1 receptor from Danio rerio (Zebrafish).